Consider the following 598-residue polypeptide: UvrABC system protein C (598 aa).

Residues 14–91 (DSPGCYLHKD…IQKNMPKYNI (78 aa)) form the GIY-YIG domain. One can recognise a UVR domain in the interval 196–231 (DKIIEDLRSKMLAASEEMAFERAAEYRDLISGIATM).

The protein belongs to the UvrC family. As to quaternary structure, interacts with UvrB in an incision complex.

The protein localises to the cytoplasm. Its function is as follows. The UvrABC repair system catalyzes the recognition and processing of DNA lesions. UvrC both incises the 5' and 3' sides of the lesion. The N-terminal half is responsible for the 3' incision and the C-terminal half is responsible for the 5' incision. This Streptococcus pyogenes serotype M6 (strain ATCC BAA-946 / MGAS10394) protein is UvrABC system protein C.